The following is a 148-amino-acid chain: SPbeta prophage-derived uncharacterized protein YomK (148 aa).

Helical transmembrane passes span 72–92 and 104–124; these read WGIGSLILGTSFIGFQVLFGV and NALIYVLITIIICLWTLRNII.

It is found in the cell membrane. This Bacillus subtilis (strain 168) protein is SPbeta prophage-derived uncharacterized protein YomK (yomK).